A 572-amino-acid polypeptide reads, in one-letter code: DNA polymerase (572 aa).

The tract at residues 1–222 (MSRKMFSCDF…LPMDKEIRKA (222 aa)) is 3'-5' exonuclease and strand displacement activities. An interaction with the primer terminal protein region spans residues 56-66 (YFHNLKFDGAF). Residues Asp142 and Asp166 each coordinate Mg(2+). The interval 223-226 (YRGG) is DNA-binding; Involved in the formation of a stable complex between TP and phi29 DNA polymerase. The segment at 227–572 (FTWLNDKYKE…VLVDSVFTIK (346 aa)) is initiation, polymerization and pyrophosphorolytic activities. Mg(2+)-binding residues include Asp246 and Val247. 5-methyl-UTP-binding residues include Tyr251, Lys368, and Lys380. Mg(2+) contacts are provided by Asp453 and Asp455. Asp455 contacts 5-methyl-UTP.

The protein belongs to the DNA polymerase type-B family. As to quaternary structure, interacts with the primer terminal protein; this interaction allows the initiation of TP-primed DNA replication at both viral DNA ends. Interacts with DNA. Mg(2+) is required as a cofactor.

The catalysed reaction is DNA(n) + a 2'-deoxyribonucleoside 5'-triphosphate = DNA(n+1) + diphosphate. Polymerase responsible for protein-primed viral DNA replication by strand displacement with high processivity and fidelity. To start replication, the DNA polymerase forms a heterodimer with a free primer terminal protein (TP), recognizes the replication origins at both 5' ends of the linear chromosome, and initiates replication using as primer the OH-group of Ser-232 of the TP. This polymerase possesses three enzymatic activities: DNA synthesis (polymerase), primer terminal protein (TP) deoxynucleotidylation, which is the formation of a covalent linkage (phosphoester) between the hydroxyl group of a specific serine residue in TP and 5'-dAMP, a reaction directed by the second T at the 3' end, and 3' to 5' exonuclease activity. Exonuclease activity has a proofreading purpose. This is DNA polymerase (G) from Bacillus phage M2 (Bacteriophage M2).